Here is a 253-residue protein sequence, read N- to C-terminus: N-acetylmuramoyl-L-alanine amidase CwlM (253 aa).

In terms of domain architecture, MurNAc-LAA spans 4-172; it reads IFIDPGHGGS…IARGHANGLA (169 aa). Residues 179–253 form the SPOR domain; that stretch reads KNAAALYKVQ…AEFDTFIYQE (75 aa). A run of 2 repeats spans residues 184-219 and 220-253. Positions 184–253 are 2 X 35 AA approximate tandem repeats; that stretch reads LYKVQIAAFR…AEFDTFIYQE (70 aa).

It belongs to the N-acetylmuramoyl-L-alanine amidase 3 family.

The protein localises to the secreted. The catalysed reaction is Hydrolyzes the link between N-acetylmuramoyl residues and L-amino acid residues in certain cell-wall glycopeptides.. Hydrolyzes the cell wall of M.luteus more efficiently than that of B.licheniformis and B.subtilis. The C-terminal region, including the repeats, determines substrate specificity. This is N-acetylmuramoyl-L-alanine amidase CwlM (cwlM) from Bacillus licheniformis.